Here is a 78-residue protein sequence, read N- to C-terminus: Small ribosomal subunit protein bS18 (78 aa).

This sequence belongs to the bacterial ribosomal protein bS18 family. Part of the 30S ribosomal subunit. Forms a tight heterodimer with protein bS6.

In terms of biological role, binds as a heterodimer with protein bS6 to the central domain of the 16S rRNA, where it helps stabilize the platform of the 30S subunit. The polypeptide is Small ribosomal subunit protein bS18 (Beutenbergia cavernae (strain ATCC BAA-8 / DSM 12333 / CCUG 43141 / JCM 11478 / NBRC 16432 / NCIMB 13614 / HKI 0122)).